Consider the following 269-residue polypeptide: 5'-nucleotidase SurE (269 aa).

Residues aspartate 11, aspartate 12, serine 43, and asparagine 101 each coordinate a divalent metal cation.

The protein belongs to the SurE nucleotidase family. A divalent metal cation serves as cofactor.

It is found in the cytoplasm. The catalysed reaction is a ribonucleoside 5'-phosphate + H2O = a ribonucleoside + phosphate. In terms of biological role, nucleotidase that shows phosphatase activity on nucleoside 5'-monophosphates. This is 5'-nucleotidase SurE from Synechococcus sp. (strain CC9902).